A 278-amino-acid polypeptide reads, in one-letter code: Formamidopyrimidine-DNA glycosylase (278 aa).

P2 functions as the Schiff-base intermediate with DNA in the catalytic mechanism. Residue E3 is the Proton donor of the active site. K58 (proton donor; for beta-elimination activity) is an active-site residue. DNA-binding residues include H91, R109, and R158. Residues 243–277 (KVYDRKGLPCKVCKTPISQMVQGQRTTYFCSQCQK) form an FPG-type zinc finger. The Proton donor; for delta-elimination activity role is filled by R267.

Belongs to the FPG family. Monomer. Zn(2+) is required as a cofactor.

The enzyme catalyses Hydrolysis of DNA containing ring-opened 7-methylguanine residues, releasing 2,6-diamino-4-hydroxy-5-(N-methyl)formamidopyrimidine.. The catalysed reaction is 2'-deoxyribonucleotide-(2'-deoxyribose 5'-phosphate)-2'-deoxyribonucleotide-DNA = a 3'-end 2'-deoxyribonucleotide-(2,3-dehydro-2,3-deoxyribose 5'-phosphate)-DNA + a 5'-end 5'-phospho-2'-deoxyribonucleoside-DNA + H(+). In terms of biological role, involved in base excision repair of DNA damaged by oxidation or by mutagenic agents. Acts as a DNA glycosylase that recognizes and removes damaged bases. Has a preference for oxidized purines, such as 7,8-dihydro-8-oxoguanine (8-oxoG). Has AP (apurinic/apyrimidinic) lyase activity and introduces nicks in the DNA strand. Cleaves the DNA backbone by beta-delta elimination to generate a single-strand break at the site of the removed base with both 3'- and 5'-phosphates. This chain is Formamidopyrimidine-DNA glycosylase, found in Polynucleobacter necessarius subsp. necessarius (strain STIR1).